We begin with the raw amino-acid sequence, 157 residues long: MRIGHGYDVHCLVEGRKLILGGVDVPYERGLLGHSDADVLLHAIADAILGALALGDIGKHFPDTDPQFKGADSRKLLRHVMALAGQKGYVLGNVDATIVAQRPKLAPFIPEMRANLAEDLIAEIDRINVKATTTEQLGFAGRGEGIAAYAVVLMERR.

Residues aspartate 8 and histidine 10 each coordinate a divalent metal cation. Residues 8 to 10 and 34 to 35 contribute to the 4-CDP-2-C-methyl-D-erythritol 2-phosphate site; these read DVH and HS. Residue histidine 42 participates in a divalent metal cation binding. 4-CDP-2-C-methyl-D-erythritol 2-phosphate is bound by residues 56-58, 61-65, 132-135, phenylalanine 139, and arginine 142; these read DIG, FPDTD, and TTTE.

Belongs to the IspF family. Homotrimer. It depends on a divalent metal cation as a cofactor.

The catalysed reaction is 4-CDP-2-C-methyl-D-erythritol 2-phosphate = 2-C-methyl-D-erythritol 2,4-cyclic diphosphate + CMP. Its pathway is isoprenoid biosynthesis; isopentenyl diphosphate biosynthesis via DXP pathway; isopentenyl diphosphate from 1-deoxy-D-xylulose 5-phosphate: step 4/6. Functionally, involved in the biosynthesis of isopentenyl diphosphate (IPP) and dimethylallyl diphosphate (DMAPP), two major building blocks of isoprenoid compounds. Catalyzes the conversion of 4-diphosphocytidyl-2-C-methyl-D-erythritol 2-phosphate (CDP-ME2P) to 2-C-methyl-D-erythritol 2,4-cyclodiphosphate (ME-CPP) with a corresponding release of cytidine 5-monophosphate (CMP). The sequence is that of 2-C-methyl-D-erythritol 2,4-cyclodiphosphate synthase from Geobacter metallireducens (strain ATCC 53774 / DSM 7210 / GS-15).